The following is a 394-amino-acid chain: Phosphoglycerate kinase (394 aa).

Substrate is bound by residues D21 to N23, R36, H59 to R62, R118, and R151. S183 carries the post-translational modification Phosphoserine. K201 and G292 together coordinate ATP. The residue at position 299 (T299) is a Phosphothreonine. Residues E323 and G350 to S353 each bind ATP.

This sequence belongs to the phosphoglycerate kinase family. In terms of assembly, monomer.

Its subcellular location is the cytoplasm. The enzyme catalyses (2R)-3-phosphoglycerate + ATP = (2R)-3-phospho-glyceroyl phosphate + ADP. It participates in carbohydrate degradation; glycolysis; pyruvate from D-glyceraldehyde 3-phosphate: step 2/5. The polypeptide is Phosphoglycerate kinase (Bacillus cereus (strain ATCC 10987 / NRS 248)).